Here is a 336-residue protein sequence, read N- to C-terminus: Fructose-1,6-bisphosphatase class 1 (336 aa).

Positions 92, 115, 117, and 118 each coordinate Mg(2+). Substrate contacts are provided by residues 118–121 (DGSS), N211, Y244, 262–264 (YLY), and K274. E280 contacts Mg(2+).

It belongs to the FBPase class 1 family. As to quaternary structure, homotetramer. Mg(2+) serves as cofactor.

The protein resides in the cytoplasm. It carries out the reaction beta-D-fructose 1,6-bisphosphate + H2O = beta-D-fructose 6-phosphate + phosphate. Its pathway is carbohydrate biosynthesis; gluconeogenesis. This is Fructose-1,6-bisphosphatase class 1 from Hahella chejuensis (strain KCTC 2396).